The chain runs to 735 residues: Coiled-coil quantitatively-enriched protein 1 (735 aa).

Residues 514-719 (AAVQYLQRRL…TLKILEQKSL (206 aa)) adopt a coiled-coil conformation.

As to quaternary structure, interacts (during meiosis) with pcp1. Interacts with clr3, pot1, taz1 and tpz1.

It localises to the nucleus. It is found in the nucleoplasm. The protein localises to the chromosome. The protein resides in the telomere. Its function is as follows. Component of the meiotic bouquet that facilitates meiotic nuclear reorganization of the telomeres to the centrosome. Links telomeres to the meiotic centrosome component pcp1. Essential for the formation of normal telomere clusters during meiotic prophase. Required for telomere length regulation and chromosome segregation. Required for proper positioning of nucleosomes at heterochromatic loci and for transcriptional gene silencing (TGS) function of the Snf2/Hdac-containing repressor complex (SHREC). This is Coiled-coil quantitatively-enriched protein 1 (ccq1) from Schizosaccharomyces pombe (strain 972 / ATCC 24843) (Fission yeast).